The chain runs to 701 residues: Serologically defined colon cancer antigen 8 homolog (701 aa).

Positions 1 to 13 are enriched in acidic residues; the sequence is MKPSLESDEEEEL. 2 disordered regions span residues 1–67 and 84–114; these read MKPS…VQQS and ANIQ…GVHN. The segment covering 45-67 has biased composition (polar residues); sequence SEPNQQELLSSVQQNPCSPVQQS. Coiled coils occupy residues 119 to 173, 203 to 258, and 323 to 695; these read INNQ…LKEY, HKWR…AVAA, and QQVK…AGKR. Residues 364–387 are disordered; the sequence is LASEQDKISQAREAARSESKKERE.

The protein resides in the cytoplasm. The protein localises to the cytoskeleton. Its subcellular location is the microtubule organizing center. It is found in the centrosome. It localises to the centriole. The protein resides in the cilium basal body. The protein localises to the cell junction. Its function is as follows. Plays a role in the establishment of cell polarity and epithelial lumen formation. Also plays an essential role in ciliogenesis and subsequent Hedgehog signaling pathway that requires the presence of intact primary cilia for pathway activation. Mechanistically, interacts with and mediates RABEP2 centrosomal localization which is critical for ciliogenesis. The polypeptide is Serologically defined colon cancer antigen 8 homolog (Sdccag8) (Danio rerio (Zebrafish)).